A 338-amino-acid polypeptide reads, in one-letter code: Histidinol-phosphate aminotransferase (338 aa).

An N6-(pyridoxal phosphate)lysine modification is found at Lys-204.

The protein belongs to the class-II pyridoxal-phosphate-dependent aminotransferase family. Histidinol-phosphate aminotransferase subfamily. Pyridoxal 5'-phosphate serves as cofactor.

The catalysed reaction is L-histidinol phosphate + 2-oxoglutarate = 3-(imidazol-4-yl)-2-oxopropyl phosphate + L-glutamate. Its pathway is amino-acid biosynthesis; L-histidine biosynthesis; L-histidine from 5-phospho-alpha-D-ribose 1-diphosphate: step 7/9. The sequence is that of Histidinol-phosphate aminotransferase from Pyrococcus furiosus (strain ATCC 43587 / DSM 3638 / JCM 8422 / Vc1).